The primary structure comprises 888 residues: Molybdenum cofactor sulfurase (888 aa).

Ser-34 bears the Phosphoserine mark. Lys-264 is modified (N6-(pyridoxal phosphate)lysine). Cys-424 is an active-site residue. Ser-528 and Ser-530 each carry phosphoserine. The region spanning 706-867 (KQSSNSQRNA…LSVGSQVLPV (162 aa)) is the MOSC domain.

The protein belongs to the class-V pyridoxal-phosphate-dependent aminotransferase family. MOCOS subfamily. Requires pyridoxal 5'-phosphate as cofactor.

The enzyme catalyses Mo-molybdopterin + L-cysteine + AH2 = thio-Mo-molybdopterin + L-alanine + A + H2O. It participates in cofactor biosynthesis; molybdopterin biosynthesis. Functionally, sulfurates the molybdenum cofactor. Sulfation of molybdenum is essential for xanthine dehydrogenase (XDH) and aldehyde oxidase (ADO) enzymes in which molybdenum cofactor is liganded by 1 oxygen and 1 sulfur atom in active form. In vitro, the C-terminal domain is able to reduce N-hydroxylated prodrugs, such as benzamidoxime. This chain is Molybdenum cofactor sulfurase, found in Homo sapiens (Human).